The sequence spans 737 residues: FYVE, RhoGEF and PH domain-containing protein 3 (737 aa).

Residues 1–151 (MESGGGSSTP…KADKDAGLAQ (151 aa)) form a disordered region. The segment covering 126–136 (ADSDVGEEPDS) has biased composition (acidic residues). At serine 128 the chain carries Phosphoserine. Positions 157 to 341 (KLLHIAQELL…STAANHSNAA (185 aa)) constitute a DH domain. One can recognise a PH 1 domain in the interval 370–469 (ELIKEGQIQK…WIQIIQATIE (100 aa)). Residues 487 to 533 (QDEDPSLSPDMPITSTSPVEPVVTTEGGSGAAGLEPRKLSSKTRRDK) form a disordered region. The segment covering 500-512 (TSTSPVEPVVTTE) has biased composition (low complexity). Residues 521 to 533 (EPRKLSSKTRRDK) are compositionally biased toward basic and acidic residues. The segment at 532–588 (DKEKQSCKSCGETFNSITKRRHHCKLCGVVICGKCSEFKAENSRQSRVCRECFLTQP) adopts an FYVE-type zinc-finger fold. 8 residues coordinate Zn(2+): cysteine 538, cysteine 541, cysteine 555, cysteine 558, cysteine 563, cysteine 566, cysteine 580, and cysteine 583. 2 disordered regions span residues 589–620 (VAPE…SLLC) and 713–737 (AARG…AAAP). Residues 616–715 (PSLLCGPLRL…WLETLSTAAR (100 aa)) form the PH 2 domain.

The protein localises to the cytoplasm. Its subcellular location is the cytoskeleton. Functionally, promotes the formation of filopodia. May activate CDC42, a member of the Ras-like family of Rho- and Rac proteins, by exchanging bound GDP for free GTP. Plays a role in regulating the actin cytoskeleton and cell shape. The chain is FYVE, RhoGEF and PH domain-containing protein 3 (FGD3) from Pongo abelii (Sumatran orangutan).